Reading from the N-terminus, the 76-residue chain is Exodeoxyribonuclease 7 small subunit (76 aa).

It belongs to the XseB family. In terms of assembly, heterooligomer composed of large and small subunits.

Its subcellular location is the cytoplasm. The catalysed reaction is Exonucleolytic cleavage in either 5'- to 3'- or 3'- to 5'-direction to yield nucleoside 5'-phosphates.. Bidirectionally degrades single-stranded DNA into large acid-insoluble oligonucleotides, which are then degraded further into small acid-soluble oligonucleotides. This Bacillus cereus (strain G9842) protein is Exodeoxyribonuclease 7 small subunit.